The following is a 265-amino-acid chain: Uridylate kinase (265 aa).

Positions methionine 1 to serine 29 are disordered. Residue lysine 40–glycine 43 coordinates ATP. Glycine 81 lines the UMP pocket. Residues glycine 82 and arginine 86 each coordinate ATP. UMP contacts are provided by residues aspartate 101 and methionine 162–threonine 169. The ATP site is built by phenylalanine 195 and aspartate 198.

It belongs to the UMP kinase family. As to quaternary structure, homohexamer.

It is found in the cytoplasm. It carries out the reaction UMP + ATP = UDP + ADP. The protein operates within pyrimidine metabolism; CTP biosynthesis via de novo pathway; UDP from UMP (UMPK route): step 1/1. Inhibited by UTP. In terms of biological role, catalyzes the reversible phosphorylation of UMP to UDP. The protein is Uridylate kinase of Mycolicibacterium paratuberculosis (strain ATCC BAA-968 / K-10) (Mycobacterium paratuberculosis).